The primary structure comprises 300 residues: Endonuclease III-like protein 1 (300 aa).

A mitochondrion-targeting transit peptide spans Met-1–Ala-19. The tract at residues Met-1–His-53 is disordered. Basic and acidic residues predominate over residues Gly-22 to Arg-37. Over residues Lys-38–Lys-51 the composition is skewed to basic residues. Residues Arg-187 to His-211 form the HhH domain. Lys-208 acts as the Nucleophile; for N-glycosylase activity in catalysis. The [4Fe-4S] cluster site is built by Cys-278, Cys-285, Cys-288, and Cys-294.

It belongs to the Nth/MutY family. In terms of assembly, interacts with YBX1. Interacts with ERCC5/XPG; the interaction stimulates NTHL1 activity and NTHL1 binding to its DNA substrate. [4Fe-4S] cluster serves as cofactor. Post-translationally, ubiquitinated by TRIM26; leading to proteasomal degradation. In terms of tissue distribution, widely expressed.

It localises to the nucleus. The protein localises to the mitochondrion. It catalyses the reaction 2'-deoxyribonucleotide-(2'-deoxyribose 5'-phosphate)-2'-deoxyribonucleotide-DNA = a 3'-end 2'-deoxyribonucleotide-(2,3-dehydro-2,3-deoxyribose 5'-phosphate)-DNA + a 5'-end 5'-phospho-2'-deoxyribonucleoside-DNA + H(+). Bifunctional DNA N-glycosylase with associated apurinic/apyrimidinic (AP) lyase function that catalyzes the first step in base excision repair (BER), the primary repair pathway for the repair of oxidative DNA damage. The DNA N-glycosylase activity releases the damaged DNA base from DNA by cleaving the N-glycosidic bond, leaving an AP site. The AP lyase activity cleaves the phosphodiester bond 3' to the AP site by a beta-elimination. Primarily recognizes and repairs oxidative base damage of pyrimidines. This Mus musculus (Mouse) protein is Endonuclease III-like protein 1 (Nthl1).